Here is an 81-residue protein sequence, read N- to C-terminus: Large ribosomal subunit protein bL27 (81 aa).

The tract at residues 1-22 is disordered; it reads MAHKTGQSSSSNGRESKSKRLG.

This sequence belongs to the bacterial ribosomal protein bL27 family.

The chain is Large ribosomal subunit protein bL27 from Opitutus terrae (strain DSM 11246 / JCM 15787 / PB90-1).